Reading from the N-terminus, the 57-residue chain is Potassium channel toxin alpha-KTx 23.3 (57 aa).

The N-terminal stretch at 1–23 (MKMSIVIILLLFTCLIATNGASG) is a signal peptide. 4 disulfides stabilise this stretch: Cys26-Cys46, Cys32-Cys51, Cys36-Cys53, and Cys41-Cys56.

This sequence belongs to the short scorpion toxin superfamily. Potassium channel inhibitor family. Alpha-KTx 23 subfamily. Expressed by the venom gland.

It localises to the secreted. Its function is as follows. This toxin shows both immunosuppressive and anti-inflammatory activities. It has the potential to inhibit human T cell activation, since it reduces IL-2 secretion and the expression of T cell activation marker CD69 and acts as an anti-inflammatory agent, since it provokes the reduction of secretion of both IFN-gamma and TNF-alpha. In vivo, the delayed-type hypersensitivity response in rat autoimmune disease model is ameliorated in the presence of this toxin. Acts by blocking Kv1.3/KCNA3 potassium channels of T-lymphocytes. The sequence is that of Potassium channel toxin alpha-KTx 23.3 from Scorpiops tibetanus (Scorpion).